We begin with the raw amino-acid sequence, 172 residues long: Capsid protein (172 aa).

The tract at residues 1–26 (MASKWNWSGTKGRRTPRRPYGRPYKS) is disordered. Over residues 11–20 (KGRRTPRRPY) the composition is skewed to basic residues.

This sequence belongs to the nanoviridae capsid protein family.

The protein resides in the virion. This is Capsid protein (DNA-S) from Faba bean necrotic yellows virus (isolate Egyptian EV1-93) (FBNYV).